Here is a 96-residue protein sequence, read N- to C-terminus: Co-chaperonin GroES (96 aa).

Belongs to the GroES chaperonin family. In terms of assembly, heptamer of 7 subunits arranged in a ring. Interacts with the chaperonin GroEL.

It localises to the cytoplasm. Functionally, together with the chaperonin GroEL, plays an essential role in assisting protein folding. The GroEL-GroES system forms a nano-cage that allows encapsulation of the non-native substrate proteins and provides a physical environment optimized to promote and accelerate protein folding. GroES binds to the apical surface of the GroEL ring, thereby capping the opening of the GroEL channel. The sequence is that of Co-chaperonin GroES from Hydrogenovibrio crunogenus (strain DSM 25203 / XCL-2) (Thiomicrospira crunogena).